Consider the following 589-residue polypeptide: MATRKVRYKKLSVKTQLAVLREDQIEASEYESLTSENQIATGVEQAEENEYHLQAVLKGAGVAADQEIPVPPPQQSELDYDQFYPQKVAKTSTYIRFSQTVEECISCLYDMTEDDETFLKSYNMKLTPSARLSEDDFERIMDVYEDMAANITPFSAIDQTVPSYQEMLRGLEPLDSTKVMVHAKQIYEYWKSRREISKNRPLNPTLKFETHAESDELDPYVCFRRREIRQTRKTRARDVQSADKLKRLRKELEEGRQLILAAHNRELLKADMLKVERAIFDQRAIIKEQKLRLGIRTGDEDLVNQKPQKRKAPEAPSAQRPPPPPQIRMPVRPDGRPAESDLVQLSDRLAEKNAELIIEIEKKIQNHIDWNKNYVDLTGKPLSPVQGPRQDLGFRPAKTQYLMTPPASASSGSMDEPTPMDLDKPKPNPPPPVKFRGVAQDEQSLAHPPSYRRRIGRLNRLWIDRRGLPSPARDLSEEQSDRWKYDQSSDDEDDAPVYMLDPFDTKALRYRASIPLQTVTRPPPPVINRQFIPPGAVPQQLAQSSFAPGQPQPQSQPQPNQSQSLPLPQPQQPVAQPQPQPQPQAQPVS.

Disordered regions lie at residues 298–339 (GDED…RPAE), 403–430 (MTPP…PNPP), 468–497 (LPSP…DAPV), and 516–589 (LQTV…QPVS). A compositionally biased stretch (basic and acidic residues) spans 474-487 (DLSEEQSDRWKYDQ). Positions 557–566 (PQPNQSQSLP) are enriched in low complexity. A compositionally biased stretch (pro residues) spans 567–589 (LPQPQQPVAQPQPQPQPQAQPVS).

This sequence belongs to the enhancer of polycomb family. Component of the NuA4 histone acetyltransferase complex.

It is found in the nucleus. In terms of biological role, component of the NuA4 histone acetyltransferase complex which is involved in transcriptional activation of selected genes principally by acetylation of nucleosomal histone H4 and H2A. The NuA4 complex is also involved in DNA repair. Involved in gene silencing by neighboring heterochromatin, blockage of the silencing spreading along the chromosome, and required for cell cycle progression through G2/M. This chain is Enhancer of polycomb-like protein 1 (epl-1), found in Neurospora crassa (strain ATCC 24698 / 74-OR23-1A / CBS 708.71 / DSM 1257 / FGSC 987).